The primary structure comprises 33 residues: Dermonecrotic toxin LiSicTox-alphaI-1 (33 aa).

Glutamate 32 lines the Mg(2+) pocket.

It belongs to the arthropod phospholipase D family. Class II subfamily. Mg(2+) serves as cofactor. Contains 2 disulfide bonds. As to expression, expressed by the venom gland.

The protein resides in the secreted. It carries out the reaction an N-(acyl)-sphingosylphosphocholine = an N-(acyl)-sphingosyl-1,3-cyclic phosphate + choline. It catalyses the reaction an N-(acyl)-sphingosylphosphoethanolamine = an N-(acyl)-sphingosyl-1,3-cyclic phosphate + ethanolamine. The catalysed reaction is a 1-acyl-sn-glycero-3-phosphocholine = a 1-acyl-sn-glycero-2,3-cyclic phosphate + choline. The enzyme catalyses a 1-acyl-sn-glycero-3-phosphoethanolamine = a 1-acyl-sn-glycero-2,3-cyclic phosphate + ethanolamine. Its function is as follows. Dermonecrotic toxins cleave the phosphodiester linkage between the phosphate and headgroup of certain phospholipids (sphingolipid and lysolipid substrates), forming an alcohol (often choline) and a cyclic phosphate. This toxin acts on sphingomyelin (SM). It may also act on ceramide phosphoethanolamine (CPE), lysophosphatidylcholine (LPC) and lysophosphatidylethanolamine (LPE), but not on lysophosphatidylserine (LPS), and lysophosphatidylglycerol (LPG). It acts by transphosphatidylation, releasing exclusively cyclic phosphate products as second products. In vivo, intradermal injection induces dermonecrosis. Induces hemolysis, increased vascular permeability, edema, inflammatory response, and platelet aggregation. This chain is Dermonecrotic toxin LiSicTox-alphaI-1, found in Loxosceles intermedia (Brown spider).